A 445-amino-acid chain; its full sequence is Cytochrome b (445 aa).

The Cytoplasmic segment spans residues Ser-2–Val-49. A helical transmembrane segment spans residues Val-50–Met-67. At His-68 to Arg-94 the chain is on the periplasmic side. Residues Tyr-95–Phe-113 traverse the membrane as a helical segment. Heme b contacts are provided by His-97 and His-111. Residues Arg-114–Trp-129 lie on the Cytoplasmic side of the membrane. A helical membrane pass occupies residues Ile-130–Leu-149. The Periplasmic portion of the chain corresponds to Pro-150–Arg-193. A helical transmembrane segment spans residues Phe-194–Phe-216. Heme b-binding residues include His-198 and His-212. At His-217–Asp-252 the chain is on the cytoplasmic side. A helical membrane pass occupies residues Val-253–Met-270. The Periplasmic segment spans residues Pro-271–Lys-329. Residues Phe-330–Val-346 traverse the membrane as a helical segment. The Cytoplasmic segment spans residues Pro-347–Lys-364. The chain crosses the membrane as a helical span at residues Ile-365–Ala-382. Residues Gln-383–Pro-388 lie on the Periplasmic side of the membrane. A helical transmembrane segment spans residues Tyr-389–Leu-408. At Pro-409–Glu-445 the chain is on the cytoplasmic side.

The protein belongs to the cytochrome b family. In terms of assembly, the main subunits of complex b-c1 are: cytochrome b, cytochrome c1 and the Rieske protein. Heme b serves as cofactor.

The protein resides in the cell membrane. In terms of biological role, component of the ubiquinol-cytochrome c reductase complex (complex III or cytochrome b-c1 complex), which is a respiratory chain that generates an electrochemical potential coupled to ATP synthesis. The protein is Cytochrome b (petB) of Cereibacter sphaeroides (Rhodobacter sphaeroides).